A 274-amino-acid chain; its full sequence is Large ribosomal subunit protein uL2 (274 aa).

The interval 223–256 is disordered; that stretch reads VVMNPVDHPHGGGEGKTGEGRHPVDPWGNLTKGY. The span at 229 to 246 shows a compositional bias: basic and acidic residues; that stretch reads DHPHGGGEGKTGEGRHPV.

Belongs to the universal ribosomal protein uL2 family. As to quaternary structure, part of the 50S ribosomal subunit. Forms a bridge to the 30S subunit in the 70S ribosome.

One of the primary rRNA binding proteins. Required for association of the 30S and 50S subunits to form the 70S ribosome, for tRNA binding and peptide bond formation. It has been suggested to have peptidyltransferase activity; this is somewhat controversial. Makes several contacts with the 16S rRNA in the 70S ribosome. This Variovorax paradoxus (strain S110) protein is Large ribosomal subunit protein uL2.